The following is a 202-amino-acid chain: uncharacterized protein (202 aa).

This is an uncharacterized protein from Methanocaldococcus jannaschii (strain ATCC 43067 / DSM 2661 / JAL-1 / JCM 10045 / NBRC 100440) (Methanococcus jannaschii).